The primary structure comprises 159 residues: Serine-protein kinase RsbW (159 aa).

Belongs to the anti-sigma-factor family.

The enzyme catalyses L-seryl-[protein] + ATP = O-phospho-L-seryl-[protein] + ADP + H(+). The catalysed reaction is L-threonyl-[protein] + ATP = O-phospho-L-threonyl-[protein] + ADP + H(+). Negative regulator of sigma-B activity. Phosphorylates and inactivates its specific antagonist protein, RsbV. Upon phosphorylation of RsbV, RsbW is released and binds to sigma-B, thereby blocking its ability to form an RNA polymerase holoenzyme (E-sigma-B). This is Serine-protein kinase RsbW from Staphylococcus aureus (strain MRSA252).